The following is a 153-amino-acid chain: MGKISSLPTQLFKICLCDFLKIKIHIMSSSHLFYLALCLLTFTSSTTAGPETLCGAELVDALQFVCGPRGFYFNKPTGYGSSIRRAPQTGIVDECCFRSCDLRRLEMYCAPLKPTKAARSIRAQRHTDMPKTQKEVHLKNTSRGSAGNKTYRM.

Positions 49 to 77 (GPETLCGAELVDALQFVCGPRGFYFNKPT) are b. 3 disulfides stabilise this stretch: cysteine 54/cysteine 96, cysteine 66/cysteine 109, and cysteine 95/cysteine 100. The c stretch occupies residues 78–89 (GYGSSIRRAPQT). The interval 90 to 110 (GIVDECCFRSCDLRRLEMYCA) is a. The segment at 111–118 (PLKPTKAA) is d. Positions 119–153 (RSIRAQRHTDMPKTQKEVHLKNTSRGSAGNKTYRM) are cleaved as a propeptide — e peptide. A disordered region spans residues 120–153 (SIRAQRHTDMPKTQKEVHLKNTSRGSAGNKTYRM). The span at 125-138 (RHTDMPKTQKEVHL) shows a compositional bias: basic and acidic residues. Residues 139–153 (KNTSRGSAGNKTYRM) show a composition bias toward polar residues.

The protein belongs to the insulin family. As to quaternary structure, forms a ternary complex with IGFR1 and ITGAV:ITGB3. Forms a ternary complex with IGFR1 and ITGA6:ITGB4. Interacts with SH2D3C isoform 2. Forms a ternary complex with IGFBP3 and ALS.

The protein localises to the secreted. Functionally, the insulin-like growth factors, isolated from plasma, are structurally and functionally related to insulin but have a much higher growth-promoting activity. May be a physiological regulator of [1-14C]-2-deoxy-D-glucose (2DG) transport and glycogen synthesis in osteoblasts. Stimulates glucose transport in bone-derived osteoblastic (PyMS) cells and is effective at much lower concentrations than insulin, not only regarding glycogen and DNA synthesis but also with regard to enhancing glucose uptake. May play a role in synapse maturation. Ca(2+)-dependent exocytosis of IGF1 is required for sensory perception of smell in the olfactory bulb. Acts as a ligand for IGF1R. Binds to the alpha subunit of IGF1R, leading to the activation of the intrinsic tyrosine kinase activity which autophosphorylates tyrosine residues in the beta subunit thus initiating a cascade of down-stream signaling events leading to activation of the PI3K-AKT/PKB and the Ras-MAPK pathways. Binds to integrins ITGAV:ITGB3 and ITGA6:ITGB4. Its binding to integrins and subsequent ternary complex formation with integrins and IGFR1 are essential for IGF1 signaling. Induces the phosphorylation and activation of IGFR1, MAPK3/ERK1, MAPK1/ERK2 and AKT1. As part of the MAPK/ERK signaling pathway, acts as a negative regulator of apoptosis in cardiomyocytes via promotion of STUB1/CHIP-mediated ubiquitination and degradation of ICER-type isoforms of CREM. The polypeptide is Insulin-like growth factor 1 (Mus musculus (Mouse)).